The following is a 147-amino-acid chain: Hemoglobin subunit beta-1 (147 aa).

The region spanning 3–147 is the Globin domain; it reads EWTATERTHI…VVSALGRQYH (145 aa). 2 residues coordinate heme b: histidine 64 and histidine 93.

The protein belongs to the globin family. In terms of assembly, hb 1 is a heterotetramer of two alpha-1 and two beta-1 chains. Hb 2 is a heterotetramer of two alpha-2 and two beta-1 chains. In terms of tissue distribution, red blood cells.

Involved in oxygen transport from gills to the various peripheral tissues. This Boreogadus saida (Polar cod) protein is Hemoglobin subunit beta-1 (hbb1).